The primary structure comprises 709 residues: Ribosomal RNA large subunit methyltransferase K/L (709 aa).

Residues 43 to 154 (LAYRITLWTR…NGVITIAMNF (112 aa)) form the THUMP domain.

The protein belongs to the methyltransferase superfamily. RlmKL family.

Its subcellular location is the cytoplasm. It carries out the reaction guanosine(2445) in 23S rRNA + S-adenosyl-L-methionine = N(2)-methylguanosine(2445) in 23S rRNA + S-adenosyl-L-homocysteine + H(+). It catalyses the reaction guanosine(2069) in 23S rRNA + S-adenosyl-L-methionine = N(2)-methylguanosine(2069) in 23S rRNA + S-adenosyl-L-homocysteine + H(+). Functionally, specifically methylates the guanine in position 2445 (m2G2445) and the guanine in position 2069 (m7G2069) of 23S rRNA. In Shewanella sp. (strain W3-18-1), this protein is Ribosomal RNA large subunit methyltransferase K/L.